The chain runs to 253 residues: CD151 antigen (253 aa).

Residues 1 to 18 (MGEFNEKKATCGTVCLKY) are Cytoplasmic-facing. 2 S-palmitoyl cysteine lipidation sites follow: cysteine 11 and cysteine 15. A helical membrane pass occupies residues 19-39 (LLFTYNCCFWLAGLAVMAVGI). Residues 40–57 (WTLALKSDYISLLASSTY) lie on the Extracellular side of the membrane. A helical transmembrane segment spans residues 58–78 (LATAYILVVAGVVVMVTGVLG). Over 79–91 (CCATFKERRNLLR) the chain is Cytoplasmic. Residues 92–112 (LYFILLLIIFLLEIIAGILAY) traverse the membrane as a helical segment. The Extracellular segment spans residues 113–221 (VYYQQLNTEL…LESFIQEHLR (109 aa)). Asparagine 159 carries N-linked (GlcNAc...) asparagine glycosylation. Residues 222 to 242 (VIGAVGIGIACVQVFGMIFTC) form a helical membrane-spanning segment. 2 S-palmitoyl cysteine lipidation sites follow: cysteine 242 and cysteine 243. The Cytoplasmic portion of the chain corresponds to 243 to 253 (CLYRSLKLEHY).

This sequence belongs to the tetraspanin (TM4SF) family. Interacts with integrins ITGA3:ITGB1, ITGA5:ITGB1, ITGA3:ITGB1 and ITGA6:ITGB4 and with CD9 and CD181. Interacts (via the second extracellular domain) with integrin ITGAV:ITGB3. Interacts with ITGA3; this interaction modulates ITGA3 glycosylation pattern. Interacts with F11R. Interacts with RAC1 and CDC42; these interactions mediate physical association of RAC1 and CDC42 with integrin adhesion receptor complexes. Post-translationally, palmitoylated. Palmitoylation by ZDHHC2 regulates CD151 expression, association with other tetraspanin family proteins and function in cell adhesion. Ubiquitinated by RNF128 on lysine residues present in the tetraspanin amino terminus via 'Lys-48'-linked ubiquitin leading to proteasomal degradation.

It localises to the cell membrane. Functionally, structural component of specialized membrane microdomains known as tetraspanin-enriched microdomains (TERMs), which act as platforms for receptor clustering and signaling. Plays a role in various cellular and molecular mechanism through its association with both integrin and non-integrin proteins. These interactions facilitate critical cellular functions, including cell-to-cell communication, wound healing, platelet aggregation, trafficking, cell motility, and angiogenesis. Via interaction with JAM-A/F11R and integrin ITGA3:ITGB1, promotes the recruitment of signaling molecules such as RAC1, CDC42 and RhoGTPases to facilitate the polarization of epithelial cells and the reorganization of the actin cytoskeleton, which are critical steps in cell migration process. Regulates the glycosylation pattern of ITGA3:ITGB1 thereby modulating its activity. Plays an essential role in the maintenance of central laminin-binding integrin ITGA6:ITGB4-containing adhesion complexes. Essential for the proper assembly of the glomerular and tubular basement membranes in kidney. Contributes to T-cell activation by modulating integrin signaling leading to activation of downstream targets PTK2 and MAPK1/MAPK3. In Rattus norvegicus (Rat), this protein is CD151 antigen (Cd151).